The primary structure comprises 161 residues: Regulator of ribonuclease activity A (161 aa).

It belongs to the RraA family. In terms of assembly, homotrimer. Binds to both RNA-binding sites in the C-terminal region of Rne and to RhlB.

The protein resides in the cytoplasm. Functionally, globally modulates RNA abundance by binding to RNase E (Rne) and regulating its endonucleolytic activity. Can modulate Rne action in a substrate-dependent manner by altering the composition of the degradosome. Modulates RNA-binding and helicase activities of the degradosome. This is Regulator of ribonuclease activity A from Klebsiella pneumoniae (strain 342).